We begin with the raw amino-acid sequence, 98 residues long: NADH-ubiquinone oxidoreductase chain 4L (98 aa).

Helical transmembrane passes span 1 to 21, 29 to 49, and 61 to 81; these read MSLV…GLLM, SLLC…IMIL, and IILL…LVMV.

Belongs to the complex I subunit 4L family. As to quaternary structure, core subunit of respiratory chain NADH dehydrogenase (Complex I) which is composed of 45 different subunits.

Its subcellular location is the mitochondrion inner membrane. The enzyme catalyses a ubiquinone + NADH + 5 H(+)(in) = a ubiquinol + NAD(+) + 4 H(+)(out). Core subunit of the mitochondrial membrane respiratory chain NADH dehydrogenase (Complex I) which catalyzes electron transfer from NADH through the respiratory chain, using ubiquinone as an electron acceptor. Part of the enzyme membrane arm which is embedded in the lipid bilayer and involved in proton translocation. This is NADH-ubiquinone oxidoreductase chain 4L (MT-ND4L) from Mogera wogura (Japanese mole).